The primary structure comprises 191 residues: Fe/S biogenesis protein NfuA (191 aa).

Residues Cys149 and Cys152 each coordinate [4Fe-4S] cluster.

Belongs to the NfuA family. In terms of assembly, homodimer. The cofactor is [4Fe-4S] cluster.

In terms of biological role, involved in iron-sulfur cluster biogenesis. Binds a 4Fe-4S cluster, can transfer this cluster to apoproteins, and thereby intervenes in the maturation of Fe/S proteins. Could also act as a scaffold/chaperone for damaged Fe/S proteins. The protein is Fe/S biogenesis protein NfuA of Enterobacter sp. (strain 638).